Reading from the N-terminus, the 207-residue chain is Small ribosomal subunit protein uS4 (207 aa).

Residues 33 to 54 (KLDSKPGQHGRTSGARTSDYGN) form a disordered region. Polar residues predominate over residues 42-53 (GRTSGARTSDYG). The 64-residue stretch at 97 to 160 (SRLDNVVYRM…KKQVRIAEAL (64 aa)) folds into the S4 RNA-binding domain.

The protein belongs to the universal ribosomal protein uS4 family. In terms of assembly, part of the 30S ribosomal subunit. Contacts protein S5. The interaction surface between S4 and S5 is involved in control of translational fidelity.

Its function is as follows. One of the primary rRNA binding proteins, it binds directly to 16S rRNA where it nucleates assembly of the body of the 30S subunit. In terms of biological role, with S5 and S12 plays an important role in translational accuracy. This Cupriavidus pinatubonensis (strain JMP 134 / LMG 1197) (Cupriavidus necator (strain JMP 134)) protein is Small ribosomal subunit protein uS4.